A 396-amino-acid polypeptide reads, in one-letter code: 1-deoxy-D-xylulose 5-phosphate reductoisomerase (396 aa).

NADPH is bound by residues threonine 15, glycine 16, serine 17, isoleucine 18, glycine 41, and asparagine 129. Lysine 130 lines the 1-deoxy-D-xylulose 5-phosphate pocket. Position 131 (glutamate 131) interacts with NADPH. A Mn(2+)-binding site is contributed by aspartate 155. Residues serine 156, glutamate 157, serine 182, and histidine 205 each coordinate 1-deoxy-D-xylulose 5-phosphate. Residue glutamate 157 coordinates Mn(2+). An NADPH-binding site is contributed by glycine 211. The 1-deoxy-D-xylulose 5-phosphate site is built by serine 218, asparagine 223, lysine 224, and glutamate 227. A Mn(2+)-binding site is contributed by glutamate 227.

It belongs to the DXR family. Requires Mg(2+) as cofactor. It depends on Mn(2+) as a cofactor.

The catalysed reaction is 2-C-methyl-D-erythritol 4-phosphate + NADP(+) = 1-deoxy-D-xylulose 5-phosphate + NADPH + H(+). The protein operates within isoprenoid biosynthesis; isopentenyl diphosphate biosynthesis via DXP pathway; isopentenyl diphosphate from 1-deoxy-D-xylulose 5-phosphate: step 1/6. Its function is as follows. Catalyzes the NADPH-dependent rearrangement and reduction of 1-deoxy-D-xylulose-5-phosphate (DXP) to 2-C-methyl-D-erythritol 4-phosphate (MEP). This Xanthomonas oryzae pv. oryzae (strain PXO99A) protein is 1-deoxy-D-xylulose 5-phosphate reductoisomerase.